The sequence spans 95 residues: Osteocalcin (95 aa).

The signal sequence occupies residues 1–23; it reads MRTIFLLTLLTLAALCLSDLTDA. Residues 24–49 constitute a propeptide that is removed on maturation; the sequence is KPSGPESDKAFMSKQEGNKVVNRLRR. Residues 46–92 enclose the Gla domain; it reads RLRRYLGASVPSPDPLEPTREQCELNPACDELSDQYGLKTAYKRIYG. Positions 62, 66, 69, and 75 each coordinate Ca(2+). Glu62, Glu66, and Glu69 each carry 4-carboxyglutamate. Cys68 and Cys74 are joined by a disulfide.

The protein belongs to the osteocalcin/matrix Gla protein family. Post-translationally, gamma-carboxyglutamate residues are formed by vitamin K dependent carboxylation by GGCX. These residues are essential for the binding of calcium. Carboxylated in a Ptprv/Esp-dependent process. Decarboxylation promotes the hormone activity. As to expression, bone.

It is found in the secreted. Its function is as follows. The carboxylated form is one of the main organic components of the bone matrix, which constitutes 1-2% of the total bone protein: it acts as a negative regulator of bone formation and is required to limit bone formation without impairing bone resorption or mineralization. The carboxylated form binds strongly to apatite and calcium. The uncarboxylated form acts as a hormone secreted by osteoblasts, which regulates different cellular processes, such as energy metabolism, male fertility and brain development. Regulates of energy metabolism by acting as a hormone favoring pancreatic beta-cell proliferation, insulin secretion and sensitivity and energy expenditure. Uncarboxylated osteocalcin hormone also promotes testosterone production in the testes: acts as a ligand for G protein-coupled receptor GPRC6A at the surface of Leydig cells, initiating a signaling response that promotes the expression of enzymes required for testosterone synthesis in a CREB-dependent manner. Also acts as a regulator of brain development: osteocalcin hormone crosses the blood-brain barrier and acts as a ligand for GPR158 on neurons, initiating a signaling response that prevents neuronal apoptosis in the hippocampus, favors the synthesis of all monoamine neurotransmitters and inhibits that of gamma-aminobutyric acid (GABA). Osteocalcin also crosses the placenta during pregnancy and maternal osteocalcin is required for fetal brain development. This chain is Osteocalcin, found in Mus musculus (Mouse).